A 419-amino-acid polypeptide reads, in one-letter code: F-box/LRR-repeat protein At1g67190 (419 aa).

The F-box domain maps to 1–48 (MDYLPVEVIGNILSRLGGARDVVIASATCRKWREACRKHLQTLSFNSA). LRR repeat units lie at residues 53–82 (YRDLTTNRLEILITQTIFQTMGLQGLSIMM), 96–124 (WLMYTRDTLRRLSYNVRTTPNVNILEICG), 133–157 (LAHNSITGVEPSFQRFPCLKSLSLS), 158–183 (YVSISALDLNLLLSACPMIESLELVS), 185–209 (EIAMSDAQVTIELSSPTLKSVYFDG), 245–272 (HFKLDDVSVIHLDIMETSESLEVVDVNH), 273–297 (FTMVWPKFYQMISRSQKLKKLRLWD), 301–326 (DDDDEIIDVESIAAGFSHLTHLSLSY), and 356–381 (INDVFSIWVEELLRRCPNLKKLIIYG).

This chain is F-box/LRR-repeat protein At1g67190, found in Arabidopsis thaliana (Mouse-ear cress).